The chain runs to 170 residues: Peptide methionine sulfoxide reductase MsrA (170 aa).

Residue Cys14 is part of the active site.

This sequence belongs to the MsrA Met sulfoxide reductase family.

It carries out the reaction L-methionyl-[protein] + [thioredoxin]-disulfide + H2O = L-methionyl-(S)-S-oxide-[protein] + [thioredoxin]-dithiol. The catalysed reaction is [thioredoxin]-disulfide + L-methionine + H2O = L-methionine (S)-S-oxide + [thioredoxin]-dithiol. Its function is as follows. Has an important function as a repair enzyme for proteins that have been inactivated by oxidation. Catalyzes the reversible oxidation-reduction of methionine sulfoxide in proteins to methionine. The protein is Peptide methionine sulfoxide reductase MsrA of Streptomyces avermitilis (strain ATCC 31267 / DSM 46492 / JCM 5070 / NBRC 14893 / NCIMB 12804 / NRRL 8165 / MA-4680).